We begin with the raw amino-acid sequence, 212 residues long: Glycerol-3-phosphate acyltransferase (212 aa).

5 consecutive transmembrane segments (helical) span residues 3 to 23 (ILLA…VVVS), 51 to 71 (KAAI…VWLA), 78 to 98 (DVAV…PVFF), 115 to 135 (AVHP…AFFF), and 139 to 159 (SLAA…LFGT).

Belongs to the PlsY family. As to quaternary structure, probably interacts with PlsX.

The protein localises to the cell inner membrane. The catalysed reaction is an acyl phosphate + sn-glycerol 3-phosphate = a 1-acyl-sn-glycero-3-phosphate + phosphate. It participates in lipid metabolism; phospholipid metabolism. Catalyzes the transfer of an acyl group from acyl-phosphate (acyl-PO(4)) to glycerol-3-phosphate (G3P) to form lysophosphatidic acid (LPA). This enzyme utilizes acyl-phosphate as fatty acyl donor, but not acyl-CoA or acyl-ACP. The sequence is that of Glycerol-3-phosphate acyltransferase from Burkholderia ambifaria (strain MC40-6).